A 423-amino-acid chain; its full sequence is Serine hydroxymethyltransferase 2 (423 aa).

(6S)-5,6,7,8-tetrahydrofolate contacts are provided by residues leucine 121 and 125–127 (GHL). The residue at position 230 (lysine 230) is an N6-(pyridoxal phosphate)lysine. 356–358 (SPF) contacts (6S)-5,6,7,8-tetrahydrofolate.

The protein belongs to the SHMT family. In terms of assembly, homodimer. It depends on pyridoxal 5'-phosphate as a cofactor.

It localises to the cytoplasm. The enzyme catalyses (6R)-5,10-methylene-5,6,7,8-tetrahydrofolate + glycine + H2O = (6S)-5,6,7,8-tetrahydrofolate + L-serine. Its pathway is one-carbon metabolism; tetrahydrofolate interconversion. It functions in the pathway amino-acid biosynthesis; glycine biosynthesis; glycine from L-serine: step 1/1. Functionally, catalyzes the reversible interconversion of serine and glycine with tetrahydrofolate (THF) serving as the one-carbon carrier. This reaction serves as the major source of one-carbon groups required for the biosynthesis of purines, thymidylate, methionine, and other important biomolecules. Also exhibits THF-independent aldolase activity toward beta-hydroxyamino acids, producing glycine and aldehydes, via a retro-aldol mechanism. In Pectobacterium atrosepticum (strain SCRI 1043 / ATCC BAA-672) (Erwinia carotovora subsp. atroseptica), this protein is Serine hydroxymethyltransferase 2.